Reading from the N-terminus, the 85-residue chain is Sec-independent protein translocase protein TatA (85 aa).

Residues M1–G21 form a helical membrane-spanning segment. The segment covering F39–P51 has biased composition (basic and acidic residues). Positions F39 to G85 are disordered. Positions G53–G62 are enriched in polar residues. Residues R66–G85 show a composition bias toward basic and acidic residues.

The protein belongs to the TatA/E family. The Tat system comprises two distinct complexes: a TatABC complex, containing multiple copies of TatA, TatB and TatC subunits, and a separate TatA complex, containing only TatA subunits. Substrates initially bind to the TatABC complex, which probably triggers association of the separate TatA complex to form the active translocon.

It localises to the cell inner membrane. Functionally, part of the twin-arginine translocation (Tat) system that transports large folded proteins containing a characteristic twin-arginine motif in their signal peptide across membranes. TatA could form the protein-conducting channel of the Tat system. In Ralstonia pickettii (strain 12J), this protein is Sec-independent protein translocase protein TatA.